The chain runs to 428 residues: Enolase (428 aa).

Glutamine 163 lines the (2R)-2-phosphoglycerate pocket. Catalysis depends on glutamate 205, which acts as the Proton donor. 3 residues coordinate Mg(2+): aspartate 242, glutamate 286, and aspartate 313. The (2R)-2-phosphoglycerate site is built by lysine 338, arginine 367, serine 368, and lysine 389. Lysine 338 serves as the catalytic Proton acceptor.

The protein belongs to the enolase family. Requires Mg(2+) as cofactor.

It is found in the cytoplasm. The protein localises to the secreted. It localises to the cell surface. The enzyme catalyses (2R)-2-phosphoglycerate = phosphoenolpyruvate + H2O. It functions in the pathway carbohydrate degradation; glycolysis; pyruvate from D-glyceraldehyde 3-phosphate: step 4/5. Its function is as follows. Catalyzes the reversible conversion of 2-phosphoglycerate (2-PG) into phosphoenolpyruvate (PEP). It is essential for the degradation of carbohydrates via glycolysis. The sequence is that of Enolase from Acidovorax sp. (strain JS42).